A 132-amino-acid polypeptide reads, in one-letter code: Small ribosomal subunit protein uS8 (132 aa).

The protein belongs to the universal ribosomal protein uS8 family. In terms of assembly, part of the 30S ribosomal subunit. Contacts proteins S5 and S12.

Its function is as follows. One of the primary rRNA binding proteins, it binds directly to 16S rRNA central domain where it helps coordinate assembly of the platform of the 30S subunit. This chain is Small ribosomal subunit protein uS8, found in Rhodococcus jostii (strain RHA1).